The following is a 366-amino-acid chain: Aminomethyltransferase (366 aa).

This sequence belongs to the GcvT family. The glycine cleavage system is composed of four proteins: P, T, L and H.

It carries out the reaction N(6)-[(R)-S(8)-aminomethyldihydrolipoyl]-L-lysyl-[protein] + (6S)-5,6,7,8-tetrahydrofolate = N(6)-[(R)-dihydrolipoyl]-L-lysyl-[protein] + (6R)-5,10-methylene-5,6,7,8-tetrahydrofolate + NH4(+). Functionally, the glycine cleavage system catalyzes the degradation of glycine. This chain is Aminomethyltransferase, found in Bacillus anthracis (strain A0248).